Reading from the N-terminus, the 197-residue chain is Recombination protein RecR (197 aa).

The C4-type zinc finger occupies 56–71; that stretch reads CVRCFSLTDAETCNFC. Positions 79-174 constitute a Toprim domain; it reads RVLCVVETFA…RVTRIAQGLP (96 aa).

It belongs to the RecR family.

May play a role in DNA repair. It seems to be involved in an RecBC-independent recombinational process of DNA repair. It may act with RecF and RecO. The protein is Recombination protein RecR of Myxococcus xanthus (strain DK1622).